Reading from the N-terminus, the 149-residue chain is Large ribosomal subunit protein bL9 (149 aa).

It belongs to the bacterial ribosomal protein bL9 family.

Binds to the 23S rRNA. The chain is Large ribosomal subunit protein bL9 from Christiangramia forsetii (strain DSM 17595 / CGMCC 1.15422 / KT0803) (Gramella forsetii).